A 754-amino-acid chain; its full sequence is Glutathione biosynthesis bifunctional protein GshAB (754 aa).

A glutamate--cysteine ligase region spans residues 1–332 (MTLNQLLQKL…QGHALNEKIA (332 aa)). The ATP-grasp domain maps to 488-746 (KKILADASFP…ITTKILDKLF (259 aa)). 515–573 (PLIKDKQIVVKPKSTNFGLGISIFQEPASLDNYQKALEIAFAEDTSVLVEEFIPGTEYR) contributes to the ATP binding site. Aspartate 695, glutamate 716, and asparagine 718 together coordinate Mg(2+). Mn(2+) contacts are provided by aspartate 695, glutamate 716, and asparagine 718.

The protein in the N-terminal section; belongs to the glutamate--cysteine ligase type 1 family. Type 2 subfamily. In terms of assembly, monomer. Mg(2+) serves as cofactor. It depends on Mn(2+) as a cofactor.

The catalysed reaction is L-cysteine + L-glutamate + ATP = gamma-L-glutamyl-L-cysteine + ADP + phosphate + H(+). The enzyme catalyses gamma-L-glutamyl-L-cysteine + glycine + ATP = glutathione + ADP + phosphate + H(+). The protein operates within sulfur metabolism; glutathione biosynthesis; glutathione from L-cysteine and L-glutamate: step 1/2. It functions in the pathway sulfur metabolism; glutathione biosynthesis; glutathione from L-cysteine and L-glutamate: step 2/2. Functionally, synthesizes glutathione from L-glutamate and L-cysteine via gamma-L-glutamyl-L-cysteine. The chain is Glutathione biosynthesis bifunctional protein GshAB from Streptococcus thermophilus (strain ATCC BAA-250 / LMG 18311).